Reading from the N-terminus, the 95-residue chain is Aspartyl/glutamyl-tRNA(Asn/Gln) amidotransferase subunit C (95 aa).

The protein belongs to the GatC family. In terms of assembly, heterotrimer of A, B and C subunits.

It catalyses the reaction L-glutamyl-tRNA(Gln) + L-glutamine + ATP + H2O = L-glutaminyl-tRNA(Gln) + L-glutamate + ADP + phosphate + H(+). The catalysed reaction is L-aspartyl-tRNA(Asn) + L-glutamine + ATP + H2O = L-asparaginyl-tRNA(Asn) + L-glutamate + ADP + phosphate + 2 H(+). Its function is as follows. Allows the formation of correctly charged Asn-tRNA(Asn) or Gln-tRNA(Gln) through the transamidation of misacylated Asp-tRNA(Asn) or Glu-tRNA(Gln) in organisms which lack either or both of asparaginyl-tRNA or glutaminyl-tRNA synthetases. The reaction takes place in the presence of glutamine and ATP through an activated phospho-Asp-tRNA(Asn) or phospho-Glu-tRNA(Gln). This Ruegeria sp. (strain TM1040) (Silicibacter sp.) protein is Aspartyl/glutamyl-tRNA(Asn/Gln) amidotransferase subunit C.